The sequence spans 502 residues: Glutamate dehydrogenase, mitochondrial (502 aa).

Residue 96 to 98 (HHR) participates in NAD(+) binding. Positions 102 and 126 each coordinate substrate. Asp-131 is a binding site for NAD(+). Lys-138 is an active-site residue. Ser-394 is a substrate binding site.

It belongs to the Glu/Leu/Phe/Val dehydrogenases family. As to quaternary structure, homohexamer.

It is found in the mitochondrion matrix. The enzyme catalyses L-glutamate + NAD(+) + H2O = 2-oxoglutarate + NH4(+) + NADH + H(+). The catalysed reaction is L-glutamate + NADP(+) + H2O = 2-oxoglutarate + NH4(+) + NADPH + H(+). Its activity is regulated as follows. Subject to allosteric regulation. Activated by AMP and ADP. The chain is Glutamate dehydrogenase, mitochondrial (gluD) from Dictyostelium discoideum (Social amoeba).